Here is a 1021-residue protein sequence, read N- to C-terminus: Replication factor C subunit 1 (1021 aa).

Disordered regions lie at residues 1 to 259 (MSSD…EGAP) and 339 to 392 (PAKA…GSAS). Residues 90-110 (KVSDELEDDMKPLPAKEVHKE) are compositionally biased toward basic and acidic residues. Residues 123–138 (SKRKTPVKPPPSKKLK) show a composition bias toward basic residues. Over residues 197 to 207 (LDDDGEEDKMD) the composition is skewed to acidic residues. Gly residues predominate over residues 219–236 (RGRGGASGGRGRGGGGRG). Basic and acidic residues-rich tracts occupy residues 241–255 (GERKDPPHKGEKEVP) and 347–357 (HQSDKNSEKQQ). Positions 257–347 (GAPDCLTGLT…KPAKATVAKH (91 aa)) constitute a BRCT domain. A compositionally biased stretch (polar residues) spans 374–392 (NQITTGKNISPKSNKGSAS). 465–472 (SGPPGIGK) serves as a coordination point for ATP. Residues 931 to 1021 (VGESLPEENG…AGGSGGKRKR (91 aa)) are disordered. A compositionally biased stretch (acidic residues) spans 945 to 958 (EGDEEDSSDAENND). The segment covering 965 to 977 (TKPKLDLQSDKKK) has biased composition (basic and acidic residues). A compositionally biased stretch (low complexity) spans 999-1010 (AGRSKASGSAGK). The span at 1011–1021 (AAGGSGGKRKR) shows a compositional bias: gly residues.

It belongs to the activator 1 large subunit family. As to quaternary structure, heterotetramer of subunits RFC2, RFC3, RFC4 and RFC5 that can form a complex with RFC1. In terms of tissue distribution, expressed in roots, leaves, shoot apical meristem (SAM), flag leaves and panicles.

The protein localises to the nucleus. Its function is as follows. May be involved in DNA replication and thus regulate cell proliferation. In Oryza sativa subsp. japonica (Rice), this protein is Replication factor C subunit 1 (RFC1).